Reading from the N-terminus, the 418-residue chain is Hepatic and glial cell adhesion molecule (418 aa).

Residues 1–33 (MKREREAPSRAFSALRLAPFVYLLLIQTEPLEG) form the signal peptide. One can recognise an Ig-like V-type domain in the interval 34 to 141 (VNITSPVRLI…TGEKTINLTV (108 aa)). The Extracellular portion of the chain corresponds to 34–240 (VNITSPVRLI…VKITVYRRSS (207 aa)). N-linked (GlcNAc...) asparagine glycans are attached at residues Asn-35, Asn-138, Asn-167, and Asn-189. Residues 148-234 (PQVLVASTTV…QGRSPPVKIT (87 aa)) enclose the Ig-like C2-type domain. Cys-168 and Cys-217 are joined by a disulfide. The chain crosses the membrane as a helical span at residues 241–261 (LYIILSTGGIFLLVTLVTVCA). Over 262–418 (CWKPSKKSGK…DEAGPVEISA (157 aa)) the chain is Cytoplasmic. Positions 271–418 (KKRKLEKQNS…DEAGPVEISA (148 aa)) are disordered. Ser-280 is subject to Phosphoserine. Over residues 287–308 (SDDRLKPEADTLPRSGEQERKN) the composition is skewed to basic and acidic residues. A phosphoserine mark is found at Ser-352 and Ser-379. Low complexity predominate over residues 385–400 (GSPGRSRSASRTLRTA).

As to quaternary structure, homodimer. Dimer formation occurs predominantly through cis interactions on the cell surface. Part of a complex containing MLC1, TRPV4, AQP4 and ATP1B1. Interacts with CLCN2. In terms of processing, N-glycosylated.

The protein localises to the cytoplasm. The protein resides in the cell membrane. Its function is as follows. Involved in regulating cell motility and cell-matrix interactions. May inhibit cell growth through suppression of cell proliferation. In glia, associates and targets CLCN2 at astrocytic processes and myelinated fiber tracts where it may regulate transcellular chloride flux involved in neuron excitability. This Bos taurus (Bovine) protein is Hepatic and glial cell adhesion molecule.